The primary structure comprises 287 residues: Shikimate kinase (287 aa).

87–97 lines the ATP pocket; the sequence is PLASGLKSSSA.

It belongs to the GHMP kinase family. Archaeal shikimate kinase subfamily.

It localises to the cytoplasm. The enzyme catalyses shikimate + ATP = 3-phosphoshikimate + ADP + H(+). It functions in the pathway metabolic intermediate biosynthesis; chorismate biosynthesis; chorismate from D-erythrose 4-phosphate and phosphoenolpyruvate: step 5/7. This is Shikimate kinase from Methanococcoides burtonii (strain DSM 6242 / NBRC 107633 / OCM 468 / ACE-M).